A 173-amino-acid chain; its full sequence is Photosystem I assembly protein Ycf3 (173 aa).

TPR repeat units lie at residues 36 to 69, 73 to 106, and 121 to 154; these read AFAY…EQGE, SYIL…NPRL, and GELS…APNN.

It belongs to the Ycf3 family.

Its subcellular location is the cellular thylakoid membrane. In terms of biological role, essential for the assembly of the photosystem I (PSI) complex. May act as a chaperone-like factor to guide the assembly of the PSI subunits. This is Photosystem I assembly protein Ycf3 from Synechococcus sp. (strain JA-2-3B'a(2-13)) (Cyanobacteria bacterium Yellowstone B-Prime).